The primary structure comprises 403 residues: Glutamyl-tRNA reductase 2 (403 aa).

Substrate is bound by residues 47 to 50 (TCHR), Ser98, 103 to 105 (ETD), and Gln109. Cys48 acts as the Nucleophile in catalysis. 177–182 (GAGAVG) contributes to the NADP(+) binding site.

The protein belongs to the glutamyl-tRNA reductase family. Homodimer.

It carries out the reaction (S)-4-amino-5-oxopentanoate + tRNA(Glu) + NADP(+) = L-glutamyl-tRNA(Glu) + NADPH + H(+). Its pathway is porphyrin-containing compound metabolism; protoporphyrin-IX biosynthesis; 5-aminolevulinate from L-glutamyl-tRNA(Glu): step 1/2. Catalyzes the NADPH-dependent reduction of glutamyl-tRNA(Glu) to glutamate 1-semialdehyde (GSA). This Pyrobaculum arsenaticum (strain DSM 13514 / JCM 11321 / PZ6) protein is Glutamyl-tRNA reductase 2.